We begin with the raw amino-acid sequence, 872 residues long: Leucine--tRNA ligase (872 aa).

Positions 42-52 match the 'HIGH' region motif; the sequence is PYPSGKLHMGH. The short motif at 632–636 is the 'KMSKS' region element; the sequence is KMSKS. Lys635 contacts ATP.

This sequence belongs to the class-I aminoacyl-tRNA synthetase family.

Its subcellular location is the cytoplasm. It catalyses the reaction tRNA(Leu) + L-leucine + ATP = L-leucyl-tRNA(Leu) + AMP + diphosphate. The sequence is that of Leucine--tRNA ligase from Chromobacterium violaceum (strain ATCC 12472 / DSM 30191 / JCM 1249 / CCUG 213 / NBRC 12614 / NCIMB 9131 / NCTC 9757 / MK).